A 146-amino-acid polypeptide reads, in one-letter code: Universal stress protein A homolog 2 (146 aa).

Belongs to the universal stress protein A family. Homodimer.

The protein resides in the cytoplasm. In terms of biological role, involved in stress response. This chain is Universal stress protein A homolog 2 (uspA2), found in Coxiella burnetii (strain RSA 493 / Nine Mile phase I).